A 1432-amino-acid chain; its full sequence is ABC transporter B family member 3 (1432 aa).

2 disordered regions span residues methionine 1–isoleucine 21 and isoleucine 48–glutamate 149. Composition is skewed to low complexity over residues serine 52–asparagine 62, asparagine 76–asparagine 106, and asparagine 118–aspartate 135. Positions glutamate 117 to valine 163 form a coiled coil. An ABC transmembrane type-1 1 domain is found at methionine 180–glutamine 479. A run of 6 helical transmembrane segments spans residues isoleucine 185–valine 205, leucine 232–isoleucine 252, lysine 303–threonine 323, glycine 325–phenylalanine 345, glycine 410–tyrosine 430, and phenylalanine 457–phenylalanine 477. Residues isoleucine 514–lysine 750 form the ABC transporter 1 domain. ATP is bound at residue glycine 549–serine 556. The disordered stretch occupies residues lysine 787–glutamate 819. The segment covering arginine 791–asparagine 807 has biased composition (basic and acidic residues). An ABC transmembrane type-1 2 domain is found at tryptophan 837 to lysine 1157. 6 consecutive transmembrane segments (helical) span residues cysteine 838–phenylalanine 858, leucine 882–phenylalanine 902, methionine 968–alanine 988, cysteine 989–serine 1009, isoleucine 1060–phenylalanine 1080, and valine 1134–aspartate 1154. The ABC transporter 2 domain occupies isoleucine 1192 to asparagine 1428. Glycine 1227–serine 1234 contributes to the ATP binding site.

It belongs to the ABC transporter superfamily. ABCB family. Multidrug resistance exporter (TC 3.A.1.201) subfamily.

The protein resides in the membrane. In Dictyostelium discoideum (Social amoeba), this protein is ABC transporter B family member 3 (abcB3).